The primary structure comprises 209 residues: GTP-binding nuclear protein Ran1A (209 aa).

The region spanning 1–162 (NFKLVIVGDG…LYLARKLAGD (162 aa)) is the Small GTPase Ran-type domain. 9 to 16 (DGGTGKTT) provides a ligand contact to GTP. The switch-I stretch occupies residues 28 to 36 (KKYEPTIGV). GTP contacts are provided by residues glycine 59, 113 to 116 (NKVD), and 141 to 143 (SAK). The segment at 59–75 (GQEKFGGLRDGYYIHGQ) is switch-II. Residues 187 to 196 (QHEAELAQAA) are compositionally biased toward low complexity. Residues 187–209 (QHEAELAQAASQPLPDDDDDAFD) are disordered.

The protein belongs to the small GTPase superfamily. Ran family. As to quaternary structure, found in a nuclear export complex with RanGTP, exportin and pre-miRNA.

The protein localises to the nucleus. GTP-binding protein involved in nucleocytoplasmic transport. Required for the import of protein into the nucleus and also for RNA export. Involved in chromatin condensation and control of cell cycle. This chain is GTP-binding nuclear protein Ran1A (RAN1A), found in Lotus japonicus (Lotus corniculatus var. japonicus).